The following is a 220-amino-acid chain: Phosphatidylserine decarboxylase proenzyme (220 aa).

Serine 189 (schiff-base intermediate with substrate; via pyruvic acid) is an active-site residue. Serine 189 is subject to Pyruvic acid (Ser); by autocatalysis.

It belongs to the phosphatidylserine decarboxylase family. PSD-A subfamily. As to quaternary structure, heterodimer of a large membrane-associated beta subunit and a small pyruvoyl-containing alpha subunit. It depends on pyruvate as a cofactor. Is synthesized initially as an inactive proenzyme. Formation of the active enzyme involves a self-maturation process in which the active site pyruvoyl group is generated from an internal serine residue via an autocatalytic post-translational modification. Two non-identical subunits are generated from the proenzyme in this reaction, and the pyruvate is formed at the N-terminus of the alpha chain, which is derived from the carboxyl end of the proenzyme. The post-translation cleavage follows an unusual pathway, termed non-hydrolytic serinolysis, in which the side chain hydroxyl group of the serine supplies its oxygen atom to form the C-terminus of the beta chain, while the remainder of the serine residue undergoes an oxidative deamination to produce ammonia and the pyruvoyl prosthetic group on the alpha chain.

Its subcellular location is the cell membrane. It carries out the reaction a 1,2-diacyl-sn-glycero-3-phospho-L-serine + H(+) = a 1,2-diacyl-sn-glycero-3-phosphoethanolamine + CO2. It functions in the pathway phospholipid metabolism; phosphatidylethanolamine biosynthesis; phosphatidylethanolamine from CDP-diacylglycerol: step 2/2. Its function is as follows. Catalyzes the formation of phosphatidylethanolamine (PtdEtn) from phosphatidylserine (PtdSer). The sequence is that of Phosphatidylserine decarboxylase proenzyme from Pelobacter propionicus (strain DSM 2379 / NBRC 103807 / OttBd1).